The primary structure comprises 429 residues: Argininosuccinate lyase (429 aa).

It belongs to the lyase 1 family. Argininosuccinate lyase subfamily.

It localises to the cytoplasm. It catalyses the reaction 2-(N(omega)-L-arginino)succinate = fumarate + L-arginine. Its pathway is amino-acid biosynthesis; L-arginine biosynthesis; L-arginine from L-ornithine and carbamoyl phosphate: step 3/3. This chain is Argininosuccinate lyase, found in Pyrobaculum arsenaticum (strain DSM 13514 / JCM 11321 / PZ6).